The sequence spans 468 residues: UDP-N-acetylmuramate--L-alanine ligase (468 aa).

Residue 112–118 (GTHGKTT) participates in ATP binding.

This sequence belongs to the MurCDEF family.

It is found in the cytoplasm. The enzyme catalyses UDP-N-acetyl-alpha-D-muramate + L-alanine + ATP = UDP-N-acetyl-alpha-D-muramoyl-L-alanine + ADP + phosphate + H(+). It participates in cell wall biogenesis; peptidoglycan biosynthesis. Cell wall formation. This is UDP-N-acetylmuramate--L-alanine ligase from Bordetella avium (strain 197N).